The chain runs to 317 residues: Sulfate adenylyltransferase subunit 2 (317 aa).

Disordered regions lie at residues 1-21 and 298-317; these read MPDSRPDTELSNPQSAKAPLD and RAIDRDQSGSMEKKKREGYF.

It belongs to the PAPS reductase family. CysD subfamily. Heterodimer composed of CysD, the smaller subunit, and CysN.

It catalyses the reaction sulfate + ATP + H(+) = adenosine 5'-phosphosulfate + diphosphate. Its pathway is sulfur metabolism; hydrogen sulfide biosynthesis; sulfite from sulfate: step 1/3. In terms of biological role, with CysN forms the ATP sulfurylase (ATPS) that catalyzes the adenylation of sulfate producing adenosine 5'-phosphosulfate (APS) and diphosphate, the first enzymatic step in sulfur assimilation pathway. APS synthesis involves the formation of a high-energy phosphoric-sulfuric acid anhydride bond driven by GTP hydrolysis by CysN coupled to ATP hydrolysis by CysD. This is Sulfate adenylyltransferase subunit 2 from Rhizobium johnstonii (strain DSM 114642 / LMG 32736 / 3841) (Rhizobium leguminosarum bv. viciae).